We begin with the raw amino-acid sequence, 1669 residues long: Collagen alpha-1(IV) chain (1669 aa).

An N-terminal signal peptide occupies residues 1–27 (MGPRLSVWLLLLFAALLLHEERSRAAA). Residues 28–172 (KGDCGGSGCG…LGHVPGTLLK (145 aa)) constitute a propeptide, N-terminal propeptide (7S domain). The segment at 47–1443 (QKGERGLPGL…MGPPGTPSVD (1397 aa)) is disordered. The span at 92–104 (TRGPPGAAGYPGN) shows a compositional bias: low complexity. The N-linked (GlcNAc...) asparagine glycan is linked to asparagine 126. Positions 173-1440 (GERGFPGIPG…PGSMGPPGTP (1268 aa)) are triple-helical region. Pro residues predominate over residues 196–214 (VGPPGFTGPPGPPGPPGPP). 3 positions are modified to 3-hydroxyproline: proline 204, proline 207, and proline 210. The span at 234–247 (QGVSGPPGVPGQAQ) shows a compositional bias: low complexity. Basic and acidic residues predominate over residues 289–298 (PGKDGEKGER). Residues 367–376 (PGQPGPPGFP) show a composition bias toward pro residues. Residues 377–387 (TPGQAGAPGFP) are compositionally biased toward low complexity. Composition is skewed to pro residues over residues 413 to 424 (PGPPGPPGPPGQ) and 436 to 448 (PGPP…PGTP). The segment covering 485–494 (PGEIGFPGQP) has biased composition (low complexity). 2 stretches are compositionally biased toward basic and acidic residues: residues 497-508 (KGDRGLPGRDGL) and 535-545 (FDMRLKGDKGD). Gly residues predominate over residues 586–595 (GPPGGVGFPG). Residues proline 587 and proline 602 each carry the 3-hydroxyproline modification. Proline 603 carries the 4-hydroxyproline modification. Proline 605 carries the post-translational modification 3-hydroxyproline. Proline 606 is subject to 4-hydroxyproline. The segment covering 611 to 620 (IGPVGEKGQA) has biased composition (low complexity). Over residues 621–630 (GFPGGPGSPG) the composition is skewed to gly residues. 4-hydroxyproline occurs at positions 623, 626, 629, and 632. Proline 647 carries the post-translational modification 3-hydroxyproline. Positions 715–731 (RPGFNGLPGNPGPQGQK) are enriched in low complexity. Gly residues predominate over residues 758-767 (GSIGGPGVPG). Over residues 784-802 (PGPPGVQGPAGPPGVPGIG) the composition is skewed to pro residues. Over residues 803 to 817 (PPGAMGPPGGQGPPG) the composition is skewed to gly residues. 2 stretches are compositionally biased toward low complexity: residues 847 to 875 (SQGL…PGFP) and 994 to 1003 (DPGLSGTPGS). The span at 1011-1020 (GSVGGMGLPG) shows a compositional bias: gly residues. 3-hydroxyproline is present on proline 1214. The span at 1220–1230 (QPGLPGTPGHP) shows a compositional bias: low complexity. Residues 1247–1258 (PGHPGPMGPPGF) are compositionally biased toward pro residues. The span at 1290–1299 (GMPGIGGSPG) shows a compositional bias: gly residues. 3 stretches are compositionally biased toward low complexity: residues 1333–1343 (DQGVPGPKGLQ), 1368–1391 (PGLK…SVGL), and 1398–1412 (PGFD…ETGP). Pro residues predominate over residues 1413-1428 (FGPPGPRGFPGPPGPD). Proline 1424 is modified (3-hydroxyproline). The Collagen IV NC1 domain maps to 1445–1669 (GFLVTRHSQT…SRCQVCMRRT (225 aa)). 6 disulfide bridges follow: cysteine 1460/cysteine 1551, cysteine 1493/cysteine 1548, cysteine 1505/cysteine 1511, cysteine 1570/cysteine 1665, cysteine 1604/cysteine 1662, and cysteine 1616/cysteine 1622. Methionine 1533 participates in a covalent cross-link: S-Lysyl-methionine sulfilimine (Met-Lys) (interchain with K-1651). Residue lysine 1651 forms an S-Lysyl-methionine sulfilimine (Lys-Met) (interchain with M-1533) linkage.

The protein belongs to the type IV collagen family. As to quaternary structure, there are six type IV collagen isoforms, alpha 1(IV)-alpha 6(IV), each of which can form a triple helix structure with 2 other chains to generate type IV collagen network. Interacts with EFEMP2. In terms of processing, lysines at the third position of the tripeptide repeating unit (G-X-Y) are hydroxylated. The modified lysines can be O-glycosylated. Contains 4-hydroxyproline. Prolines at the third position of the tripeptide repeating unit (G-X-Y) are hydroxylated in some or all of the chains. Post-translationally, contains 3-hydroxyproline. This modification occurs on the first proline residue in the sequence motif Gly-Pro-Hyp, where Hyp is 4-hydroxyproline. In terms of processing, type IV collagens contain numerous cysteine residues which are involved in inter- and intramolecular disulfide bonding. 12 of these, located in the NC1 domain, are conserved in all known type IV collagens. The trimeric structure of the NC1 domains is stabilized by covalent bonds (sulfilimine cross-links) between Lys and Met residues. These cross-links are important for the mechanical stability of the basement membrane. Sulfilimine cross-link is catalyzed by PXDN. Post-translationally, proteolytic processing produces the C-terminal NC1 peptide, arresten. As to expression, detected in the basement membrane of the cornea (at protein level).

The protein resides in the secreted. Its subcellular location is the extracellular space. The protein localises to the extracellular matrix. It localises to the basement membrane. Functionally, type IV collagen is the major structural component of glomerular basement membranes (GBM), forming a 'chicken-wire' meshwork together with laminins, proteoglycans and entactin/nidogen. Its function is as follows. Arresten, comprising the C-terminal NC1 domain, inhibits angiogenesis and tumor formation. The C-terminal half is found to possess the anti-angiogenic activity. Specifically inhibits endothelial cell proliferation, migration and tube formation. This chain is Collagen alpha-1(IV) chain, found in Mus musculus (Mouse).